Here is a 394-residue protein sequence, read N- to C-terminus: Chalcone synthase 2 (394 aa).

The active site involves Cys167.

Belongs to the thiolase-like superfamily. Chalcone/stilbene synthases family.

It catalyses the reaction (E)-4-coumaroyl-CoA + 3 malonyl-CoA + 3 H(+) = 2',4,4',6'-tetrahydroxychalcone + 3 CO2 + 4 CoA. It functions in the pathway secondary metabolite biosynthesis; flavonoid biosynthesis. The primary product of this enzyme is 4,2',4',6'-tetrahydroxychalcone (also termed naringenin-chalcone or chalcone) which can under specific conditions spontaneously isomerize into naringenin. The protein is Chalcone synthase 2 (CHS2) of Secale cereale (Rye).